Here is a 188-residue protein sequence, read N- to C-terminus: Elongation factor P (188 aa).

The residue at position 34 (lysine 34) is an N6-(3,6-diaminohexanoyl)-5-hydroxylysine.

The protein belongs to the elongation factor P family. Post-translationally, may be beta-lysylated on the epsilon-amino group of Lys-34 by the combined action of EpmA and EpmB, and then hydroxylated on the C5 position of the same residue by EpmC (if this protein is present). Lysylation is critical for the stimulatory effect of EF-P on peptide-bond formation. The lysylation moiety may extend toward the peptidyltransferase center and stabilize the terminal 3-CCA end of the tRNA. Hydroxylation of the C5 position on Lys-34 may allow additional potential stabilizing hydrogen-bond interactions with the P-tRNA.

Its subcellular location is the cytoplasm. It participates in protein biosynthesis; polypeptide chain elongation. Functionally, involved in peptide bond synthesis. Alleviates ribosome stalling that occurs when 3 or more consecutive Pro residues or the sequence PPG is present in a protein, possibly by augmenting the peptidyl transferase activity of the ribosome. Modification of Lys-34 is required for alleviation. This chain is Elongation factor P, found in Glaesserella parasuis serovar 5 (strain SH0165) (Haemophilus parasuis).